The following is a 153-amino-acid chain: Large ribosomal subunit protein uL15 (153 aa).

Residues 21–42 (RGIGSGKGKTGGRGIKGQKSRS) form a disordered region. Residues 23-35 (IGSGKGKTGGRGI) are compositionally biased toward gly residues.

This sequence belongs to the universal ribosomal protein uL15 family. As to quaternary structure, part of the 50S ribosomal subunit.

Functionally, binds to the 23S rRNA. The polypeptide is Large ribosomal subunit protein uL15 (Rickettsia peacockii (strain Rustic)).